Reading from the N-terminus, the 132-residue chain is Mini-ribonuclease 3 (132 aa).

Asp-17 is an active-site residue.

This sequence belongs to the MrnC RNase family. In terms of assembly, homodimer. Mg(2+) serves as cofactor.

The protein resides in the cytoplasm. Involved in correct processing of both the 5' and 3' ends of 23S rRNA precursor. Processes 30S rRNA precursor transcript even in absence of ribonuclease 3 (Rnc); Rnc processes 30S rRNA into smaller rRNA precursors. This is Mini-ribonuclease 3 from Enterococcus faecalis (strain ATCC 700802 / V583).